A 170-amino-acid polypeptide reads, in one-letter code: Acireductone dioxygenase (170 aa).

Residues His-99, His-101, Glu-105, and His-144 each contribute to the Fe(2+) site. Positions 99, 101, 105, and 144 each coordinate Ni(2+).

This sequence belongs to the acireductone dioxygenase (ARD) family. As to quaternary structure, monomer. Requires Fe(2+) as cofactor. The cofactor is Ni(2+).

It carries out the reaction 1,2-dihydroxy-5-(methylsulfanyl)pent-1-en-3-one + O2 = 3-(methylsulfanyl)propanoate + CO + formate + 2 H(+). It catalyses the reaction 1,2-dihydroxy-5-(methylsulfanyl)pent-1-en-3-one + O2 = 4-methylsulfanyl-2-oxobutanoate + formate + 2 H(+). It participates in amino-acid biosynthesis; L-methionine biosynthesis via salvage pathway; L-methionine from S-methyl-5-thio-alpha-D-ribose 1-phosphate: step 5/6. Catalyzes 2 different reactions between oxygen and the acireductone 1,2-dihydroxy-3-keto-5-methylthiopentene (DHK-MTPene) depending upon the metal bound in the active site. Fe-containing acireductone dioxygenase (Fe-ARD) produces formate and 2-keto-4-methylthiobutyrate (KMTB), the alpha-ketoacid precursor of methionine in the methionine recycle pathway. Ni-containing acireductone dioxygenase (Ni-ARD) produces methylthiopropionate, carbon monoxide and formate, and does not lie on the methionine recycle pathway. In Bacillus cereus (strain ATCC 10987 / NRS 248), this protein is Acireductone dioxygenase.